The following is a 252-amino-acid chain: L-aspartate dehydrogenase (252 aa).

Residues Ala119 and Asn175 each contribute to the NAD(+) site. The active site involves His203.

Belongs to the L-aspartate dehydrogenase family.

The enzyme catalyses L-aspartate + NADP(+) + H2O = oxaloacetate + NH4(+) + NADPH + H(+). The catalysed reaction is L-aspartate + NAD(+) + H2O = oxaloacetate + NH4(+) + NADH + H(+). Its pathway is cofactor biosynthesis; NAD(+) biosynthesis; iminoaspartate from L-aspartate (dehydrogenase route): step 1/1. Specifically catalyzes the NAD or NADP-dependent dehydrogenation of L-aspartate to iminoaspartate. The sequence is that of L-aspartate dehydrogenase from Methanospirillum hungatei JF-1 (strain ATCC 27890 / DSM 864 / NBRC 100397 / JF-1).